We begin with the raw amino-acid sequence, 265 residues long: Undecaprenyl-diphosphatase (265 aa).

The next 8 membrane-spanning stretches (helical) occupy residues 1-21, 40-60, 87-107, 113-133, 151-173, 188-208, 214-234, and 244-264; these read MDWLHVVALAVIQGLTEFLPI, GLAFDVAVHVGSLAAVVLAFH, WAVIVGTLPAVVIGFLLENVI, ASLVIAITTLLFGLLLWWADV, IIGFAQALALIPGTSRSGITITA, SFLLSIPLILAAGSLKGVELI, VAWGTLVAGTLMSFVAAWLCI, and IGMLPFVIYRLILGIVLLVWV.

This sequence belongs to the UppP family.

The protein localises to the cell inner membrane. The enzyme catalyses di-trans,octa-cis-undecaprenyl diphosphate + H2O = di-trans,octa-cis-undecaprenyl phosphate + phosphate + H(+). Catalyzes the dephosphorylation of undecaprenyl diphosphate (UPP). Confers resistance to bacitracin. The sequence is that of Undecaprenyl-diphosphatase from Chromohalobacter salexigens (strain ATCC BAA-138 / DSM 3043 / CIP 106854 / NCIMB 13768 / 1H11).